The following is a 378-amino-acid chain: Putative aminoglycoside phosphotransferase (378 aa).

Residues R79 and 134-136 each bind ATP; that span reads DYV. D249 acts as the Proton acceptor in catalysis. Positions 254, 267, and 269 each coordinate Mg(2+).

The protein belongs to the aminoglycoside phosphotransferase family.

Functionally, might catalyze the phosphorylation of aminoglycosides and confer aminoglycoside antibiotics resistance. This Mycobacterium tuberculosis (strain CDC 1551 / Oshkosh) protein is Putative aminoglycoside phosphotransferase.